The primary structure comprises 136 residues: Glutaredoxin-C8 (136 aa).

The 103-residue stretch at serine 33 to aspartate 135 folds into the Glutaredoxin domain. A disulfide bond links cysteine 53 and cysteine 56.

It belongs to the glutaredoxin family. CPYC subfamily.

The protein localises to the cytoplasm. Functionally, has a glutathione-disulfide oxidoreductase activity in the presence of NADPH and glutathione reductase. Reduces low molecular weight disulfides and proteins. In Oryza sativa subsp. japonica (Rice), this protein is Glutaredoxin-C8 (GRXC8).